The primary structure comprises 238 residues: ATP synthase subunit a (238 aa).

Helical transmembrane passes span 18 to 38, 76 to 96, 114 to 134, 150 to 170, 188 to 208, and 211 to 231; these read TTNL…VFAL, FGLY…IGLF, PIVT…SGVA, FKVW…TLGL, GIAF…ALIW, and FSVF…SVYI.

This sequence belongs to the ATPase A chain family. In terms of assembly, F-type ATPases have 2 components, CF(1) - the catalytic core - and CF(0) - the membrane proton channel. CF(1) has five subunits: alpha(3), beta(3), gamma(1), delta(1), epsilon(1). CF(0) has three main subunits: a(1), b(2) and c(9-12). The alpha and beta chains form an alternating ring which encloses part of the gamma chain. CF(1) is attached to CF(0) by a central stalk formed by the gamma and epsilon chains, while a peripheral stalk is formed by the delta and b chains.

Its subcellular location is the cell membrane. Functionally, key component of the proton channel; it plays a direct role in the translocation of protons across the membrane. This chain is ATP synthase subunit a, found in Pediococcus pentosaceus (strain ATCC 25745 / CCUG 21536 / LMG 10740 / 183-1w).